We begin with the raw amino-acid sequence, 263 residues long: MARHPYRRLRPAKSGFPEVGISEEGNIRSLHLGSDTVQSSMNLDHPSELVLSYSRAMMGWLLFTDALPQHITQIGLGGGSFARWIDTYLPDTRQTAVDINPQVIAIARNLFELPFEGEKFEIIEADGAEYIKVFRHNTDVILVDGFDGEQIIDALVEEPFFRDCRNALSSDGIFVTNWWSGDKRYQRFIERLLSVFEGRVLELPAESHGNVAVMAFQSSPKEQNIDKLKKRADKLSNAYGLDFHRMLAGLKASNPNNGKHFHL.

In terms of domain architecture, PABS spans 1–221 (MARHPYRRLR…AVMAFQSSPK (221 aa)). S-methyl-5'-thioadenosine-binding positions include Asp-98 and 126 to 127 (DG). The active-site Proton acceptor is the Asp-144.

This sequence belongs to the spermidine/spermine synthase family. As to quaternary structure, homodimer or homotetramer.

Its subcellular location is the cytoplasm. It catalyses the reaction S-adenosyl 3-(methylsulfanyl)propylamine + putrescine = S-methyl-5'-thioadenosine + spermidine + H(+). Its pathway is amine and polyamine biosynthesis; spermidine biosynthesis; spermidine from putrescine: step 1/1. In terms of biological role, catalyzes the irreversible transfer of a propylamine group from the amino donor S-adenosylmethioninamine (decarboxy-AdoMet) to putrescine (1,4-diaminobutane) to yield spermidine. This is Polyamine aminopropyltransferase from Neisseria meningitidis serogroup A / serotype 4A (strain DSM 15465 / Z2491).